Reading from the N-terminus, the 399-residue chain is Elongation factor Tu (399 aa).

The tr-type G domain occupies 10–204; the sequence is KPHVNIGTIG…AVDASIPEPE (195 aa). The G1 stretch occupies residues 19–26; it reads GHVDHGKT. Residue 19-26 coordinates GTP; it reads GHVDHGKT. Residue Thr-26 participates in Mg(2+) binding. Residues 60-64 are G2; the sequence is GITIN. Residues 81-84 form a G3 region; that stretch reads DCPG. GTP-binding positions include 81 to 85 and 136 to 139; these read DCPGH and NKCD. The segment at 136–139 is G4; that stretch reads NKCD. Residues 174 to 176 are G5; it reads SGL.

This sequence belongs to the TRAFAC class translation factor GTPase superfamily. Classic translation factor GTPase family. EF-Tu/EF-1A subfamily. Monomer.

The protein resides in the cytoplasm. It carries out the reaction GTP + H2O = GDP + phosphate + H(+). Its function is as follows. GTP hydrolase that promotes the GTP-dependent binding of aminoacyl-tRNA to the A-site of ribosomes during protein biosynthesis. The polypeptide is Elongation factor Tu (Prochlorococcus marinus (strain MIT 9313)).